Reading from the N-terminus, the 310-residue chain is Ornithine carbamoyltransferase (310 aa).

Residues 57 to 60 (STRT), Q84, R108, and 135 to 138 (HPCQ) contribute to the carbamoyl phosphate site. Residues N166, D229, and 233 to 234 (SM) each bind L-ornithine. Residues 269–270 (CL) and R297 each bind carbamoyl phosphate.

It belongs to the aspartate/ornithine carbamoyltransferase superfamily. OTCase family.

Its subcellular location is the cytoplasm. It catalyses the reaction carbamoyl phosphate + L-ornithine = L-citrulline + phosphate + H(+). The protein operates within amino-acid biosynthesis; L-arginine biosynthesis; L-arginine from L-ornithine and carbamoyl phosphate: step 1/3. In terms of biological role, reversibly catalyzes the transfer of the carbamoyl group from carbamoyl phosphate (CP) to the N(epsilon) atom of ornithine (ORN) to produce L-citrulline. This is Ornithine carbamoyltransferase from Thermosynechococcus vestitus (strain NIES-2133 / IAM M-273 / BP-1).